Here is a 287-residue protein sequence, read N- to C-terminus: Shikimate dehydrogenase (NADP(+)) (287 aa).

Shikimate contacts are provided by residues 20–22 (SRS) and T67. K71 functions as the Proton acceptor in the catalytic mechanism. E84 is a binding site for NADP(+). Positions 93 and 108 each coordinate shikimate. Residues 132–136 (GAGGA), 156–161 (NRTAAR), and M226 contribute to the NADP(+) site. Y228 contributes to the shikimate binding site. G250 provides a ligand contact to NADP(+).

The protein belongs to the shikimate dehydrogenase family. As to quaternary structure, homodimer.

The enzyme catalyses shikimate + NADP(+) = 3-dehydroshikimate + NADPH + H(+). The protein operates within metabolic intermediate biosynthesis; chorismate biosynthesis; chorismate from D-erythrose 4-phosphate and phosphoenolpyruvate: step 4/7. Involved in the biosynthesis of the chorismate, which leads to the biosynthesis of aromatic amino acids. Catalyzes the reversible NADPH linked reduction of 3-dehydroshikimate (DHSA) to yield shikimate (SA). The polypeptide is Shikimate dehydrogenase (NADP(+)) (Bordetella bronchiseptica (strain ATCC BAA-588 / NCTC 13252 / RB50) (Alcaligenes bronchisepticus)).